Consider the following 417-residue polypeptide: Gamma-glutamyl phosphate reductase (417 aa).

This sequence belongs to the gamma-glutamyl phosphate reductase family.

The protein localises to the cytoplasm. It carries out the reaction L-glutamate 5-semialdehyde + phosphate + NADP(+) = L-glutamyl 5-phosphate + NADPH + H(+). It functions in the pathway amino-acid biosynthesis; L-proline biosynthesis; L-glutamate 5-semialdehyde from L-glutamate: step 2/2. In terms of biological role, catalyzes the NADPH-dependent reduction of L-glutamate 5-phosphate into L-glutamate 5-semialdehyde and phosphate. The product spontaneously undergoes cyclization to form 1-pyrroline-5-carboxylate. This chain is Gamma-glutamyl phosphate reductase, found in Escherichia coli O8 (strain IAI1).